Here is a 417-residue protein sequence, read N- to C-terminus: Leucine-rich repeat-containing protein 42 (417 aa).

LRR repeat units lie at residues 167 to 188 (CLRSLDLSCCKLGDEHELLEHL), 195 to 215 (SLTELYLKDNCFSDTGIRKMT), 227 to 249 (ALKVLDLSSNPGITDRGVLFLFG), and 252 to 273 (LLQFLDLSDTSIQDRSRTVKKI). Residues 360–399 (FFRPEEQKDSDSSKSDKRQRSTKRTGADPGQEDCTIAPAT) form a disordered region. Over residues 362–378 (RPEEQKDSDSSKSDKRQ) the composition is skewed to basic and acidic residues.

This sequence belongs to the LRRC42 family.

The polypeptide is Leucine-rich repeat-containing protein 42 (lrrc42) (Xenopus tropicalis (Western clawed frog)).